The following is a 162-amino-acid chain: UPF0178 protein RSKD131_2223 (162 aa).

This sequence belongs to the UPF0178 family.

This is UPF0178 protein RSKD131_2223 from Cereibacter sphaeroides (strain KD131 / KCTC 12085) (Rhodobacter sphaeroides).